We begin with the raw amino-acid sequence, 396 residues long: Interactor of constitutive active ROPs 5 (396 aa).

2 disordered regions span residues 1–49 (MQTP…TQIP) and 99–122 (ALKREAQEEAEDAKHQLMDINASE). 2 coiled-coil regions span residues 67 to 124 (KKRT…SEDS) and 158 to 366 (LSSA…TAAS). Basic and acidic residues predominate over residues 99–115 (ALKREAQEEAEDAKHQL).

This sequence belongs to the ICR family. Component of the active ARAC10-IRC5-KIN13A complex. Homooligomer. Interacts (via C-terminus) with ARAC4, ARAC10, ARAC11 and (via N-terminus) with KIN13A (via C-terminus), but no interactions with SEC3A. As to expression, expressed in xylem cells in the roots and in stamens, petals and pollen.

It is found in the cell membrane. Its subcellular location is the cytoplasm. The protein resides in the cytoskeleton. In terms of biological role, ROP effector binding specifically activated ROPs and linking them to the microtubule cytoskeleton. Involved in ROP-regulated polar growth. Involved in local disassembly of cortical microtubules when associated with ARAC10 and KIN13A and conversely also mediates the elimination of ARAC10 from the plasma membrane by the cortical microtubules. Accumulates at the plus end of shrinking microtubules. Targets KIN13A to microtubules. This Arabidopsis thaliana (Mouse-ear cress) protein is Interactor of constitutive active ROPs 5 (ICR5).